Consider the following 151-residue polypeptide: Transcription antitermination protein NusB (151 aa).

The protein belongs to the NusB family.

Its function is as follows. Involved in transcription antitermination. Required for transcription of ribosomal RNA (rRNA) genes. Binds specifically to the boxA antiterminator sequence of the ribosomal RNA (rrn) operons. The protein is Transcription antitermination protein NusB of Thermodesulfovibrio yellowstonii (strain ATCC 51303 / DSM 11347 / YP87).